The following is a 282-amino-acid chain: MQVFENITKMQEWAREQKKQGQSIALVPTMGYLHEGHLALVKEARRQCDKVVVSIFVNPIQFGAGEDFEQYPRDLEQDSALLEKERVDALFSPGIRDMYPGSFQTFVEVYGEITEKMCGASRPGHFKGVTTVVSKLFNICQPDRAYFGQKDAQQLMIVEKMVRELNFPLEIIRVPIVREKDGLAMSSRNVYLSPEERAEALVLYRALKMAEEEIKNGEREIGIIRQKMEEMIKACPRAAIDYIAINNANDLSELQTCAGKVLIALAVKFGKTRLIDNLIVEV.

30–37 provides a ligand contact to ATP; that stretch reads MGYLHEGH. The active-site Proton donor is His37. Gln61 lines the (R)-pantoate pocket. Gln61 contributes to the beta-alanine binding site. ATP is bound at residue 148–151; it reads GQKD. (R)-pantoate is bound at residue Gln154. ATP is bound by residues Val177 and 185 to 188; that span reads MSSR.

The protein belongs to the pantothenate synthetase family. In terms of assembly, homodimer.

It is found in the cytoplasm. The catalysed reaction is (R)-pantoate + beta-alanine + ATP = (R)-pantothenate + AMP + diphosphate + H(+). Its pathway is cofactor biosynthesis; (R)-pantothenate biosynthesis; (R)-pantothenate from (R)-pantoate and beta-alanine: step 1/1. Catalyzes the condensation of pantoate with beta-alanine in an ATP-dependent reaction via a pantoyl-adenylate intermediate. This is Pantothenate synthetase from Syntrophomonas wolfei subsp. wolfei (strain DSM 2245B / Goettingen).